The sequence spans 218 residues: Pyridoxal phosphate homeostasis protein (218 aa).

K25 carries the post-translational modification N6-(pyridoxal phosphate)lysine.

Belongs to the pyridoxal phosphate-binding protein YggS/PROSC family.

Its function is as follows. Pyridoxal 5'-phosphate (PLP)-binding protein, which is involved in PLP homeostasis. The chain is Pyridoxal phosphate homeostasis protein from Synechocystis sp. (strain ATCC 27184 / PCC 6803 / Kazusa).